Consider the following 346-residue polypeptide: Dynein regulatory complex protein 9 (346 aa).

The span at 299-308 (MEKEQREKNA) shows a compositional bias: basic and acidic residues. Residues 299–346 (MEKEQREKNAATKIQAWWRGTLVRKGPRSKKADKSKKKDGKKGKKKRK) form a disordered region. Positions 305–334 (EKNAATKIQAWWRGTLVRKGPRSKKADKSK) constitute an IQ domain. The segment covering 323 to 346 (KGPRSKKADKSKKKDGKKGKKKRK) has biased composition (basic residues).

It belongs to the DRC9 family. Component of the nexin-dynein regulatory complex (N-DRC). Interacts (via IQ domain) with calmodulin when calcium levels are low. Does not interact with calmodulin in the presence of Ca(2+). Interacts with hsp70 and may form a complex with camk4 and hsp70. Detected in adult testis, and at lower levels in brain, kidney and ovary.

The protein resides in the cytoplasm. It is found in the cell projection. It localises to the cilium. The protein localises to the flagellum. Its subcellular location is the cytoskeleton. The protein resides in the flagellum axoneme. Component of the nexin-dynein regulatory complex (N-DRC), a key regulator of ciliary/flagellar motility which maintains the alignment and integrity of the distal axoneme and regulates microtubule sliding in motile axonemes. Binds calmodulin when cellular Ca(2+) levels are low and thereby contributes to the regulation of calcium and calmodulin-dependent protein kinase IV (camk4) activity; contributes to the regulation of camk4 signaling cascades. Plays a role in the regulation of definitive hematopoiesis via its effects on camk4. This Danio rerio (Zebrafish) protein is Dynein regulatory complex protein 9.